Here is a 246-residue protein sequence, read N- to C-terminus: Dihydroorotate dehydrogenase B (NAD(+)), electron transfer subunit (246 aa).

The 93-residue stretch at 3–95 (MEYFKGKVKE…IGPLGNGFDI (93 aa)) folds into the FAD-binding FR-type domain. Residues 48–51 (RPIS) and 70–71 (GT) each bind FAD. The [2Fe-2S] cluster site is built by Cys213, Cys218, Cys221, and Cys233.

The protein belongs to the PyrK family. As to quaternary structure, heterotetramer of 2 PyrK and 2 PyrD type B subunits. [2Fe-2S] cluster is required as a cofactor. The cofactor is FAD.

It participates in pyrimidine metabolism; UMP biosynthesis via de novo pathway; orotate from (S)-dihydroorotate (NAD(+) route): step 1/1. Responsible for channeling the electrons from the oxidation of dihydroorotate from the FMN redox center in the PyrD type B subunit to the ultimate electron acceptor NAD(+). This chain is Dihydroorotate dehydrogenase B (NAD(+)), electron transfer subunit, found in Clostridium perfringens (strain 13 / Type A).